Reading from the N-terminus, the 907-residue chain is Potassium channel AKT3 (907 aa).

The Cytoplasmic segment spans residues 1-75 (MPTTKCAVPL…YDRRYELWNN (75 aa)). A helical transmembrane segment spans residues 76-96 (YLILLVVYSAWVTPFEFGFVP). Topologically, residues 97-102 (EPAGAL) are extracellular. The chain crosses the membrane as a helical span at residues 103 to 123 (AAADNAVNAFFAVDIVLTFFV). Residues 124–146 (AYTDPKTFLLQDDPRKIALRYIT) are Cytoplasmic-facing. A helical transmembrane segment spans residues 147-167 (TWFVLDVVATIPTELARRILP). Residues 168 to 174 (PDLRSYG) are Extracellular-facing. Residues 175–195 (FFGILRLWRLHRVGILFARLE) traverse the membrane as a helical; Voltage-sensor segment. The Cytoplasmic segment spans residues 196–209 (KDRKFSYFWVRCVK). The helical transmembrane segment at 210–230 (LVCVTLFAVHCSACFYYLLAD) threads the bilayer. Over 231–257 (RYPDPTNTWISAYMPNFHKASIWSRYV) the chain is Extracellular. An intramembrane region (pore-forming) is located at residues 258–277 (ASMYWSITTLSTVGYGDMHA). At 278-288 (ENTGEMVFTTT) the chain is on the extracellular side. Residues 289–309 (YMLFNLGLTAYIIGNMTNLVV) form a helical membrane-spanning segment. Topologically, residues 310–907 (HGTSRTRKFR…VPPENRSRNQ (598 aa)) are cytoplasmic. A nucleoside 3',5'-cyclic phosphate is bound at residue 388–512 (LFEGVSNDLI…TIVMNNLIQY (125 aa)). ANK repeat units lie at residues 539-568 (DFPITLCFAASKGDSFLLHQLLKRGLDPNE), 572-601 (YGRTALHIAASNGNEQCVRLLLENGADSNS), 605-634 (EGRVPLWEALCRRHQTVVQLLVDAGADLSG), 636-665 (DAAPYARVAVEQNDAALLGEIVRHGGDVSG), and 670-699 (DGTTALHRAVLDGNVQMARLLLEHGADADA). 2 disordered regions span residues 726–779 (ATRH…TPQR) and 801–824 (GGYRGGGGGGGAAAERERSSSSPP). Low complexity predominate over residues 754 to 776 (SSPSSSSRRGRTSSTSAASARST). Gly residues predominate over residues 803-812 (YRGGGGGGGA). Positions 827–907 (RVAISCPESR…VPPENRSRNQ (81 aa)) constitute a KHA domain.

Belongs to the potassium channel family. Plant (TC 1.A.1.4) subfamily.

The protein localises to the membrane. Probable inward-rectifying potassium channel. Assuming opened or closed conformations in response to the voltage difference across the membrane, the channel is activated by hyperpolarization. In Oryza sativa subsp. japonica (Rice), this protein is Potassium channel AKT3.